The following is a 910-amino-acid chain: MEAKVEEKEPEPVENAGPDAPVRLTPMMEQYIEIKAANVDSLLFYRMGDFYELFFDDAVAASAALGITLTKRGKHLGEDIPMCGVPVHAADDYLQKLIAKGYRVAVCEQVEDPAEAKKRGSKSVVKRDVIRLVTPGTLTEEKLLDPAQANFLMAMGRTRGDGALALAWIDISTGTFRVAETTPDRLFADIMRVDPRELVVADSAFHDEELRPVFDLIGKAVTPQPATLFDSAAAQTRIQHYFNVATLDGFGQFSRPELSAISGAIAYIEKTQISERPPLMRPEREHEGGTLFIDPATRASLELARTMSGNRDGSLLKAIDRTVTGGGARLLAERLTAPLTSPKEIALRLDSVSWCLSEQTLCEALRLELKGVPDMPRALSRLAVGRGGPRDLGALACGFEAAGGIASLLDGALLPDELAAAREAIEKMPAGFAAHLDRALADELPLLKRDGGFVREGYNSELDEMRALRDQSRRVIAGLQADYIEETGIKSLKIKHNNVLGYFIEVTANNSGAMTDTDEAKSRFIHRQTMANAMRFTTTELAELESKIANAADRALSIELAIFEELTAEAVAHADSIRAAASALSVFDVSTALAVLAEEQGYCRPHVDDSLSFNIVAGRHPVVEQALRRQAANPFVANDCDLSPQRDGGDGAIWLLTGPNMGGKSTFLRQNALIAILAQMGSFVPAGSAHIGVVDRLFSRVGASDDLARGRSTFMVEMVETAAILNQAGEHSLVILDEIGRGTATFDGLSIAWAAVEYLHEKNRCRALFATHFHEMTALSEKLERLSNVTMRVKEWDNDVIFLHEVAKGAADRSYGVQVARLAGLPEAVVNRARDVLHQLEAGETSGKADRLIDDLPLFSVMLQQEKPKPQIQAKDSELANAVAAISPDELTPREALDLIYKLKELAGKA.

A compositionally biased stretch (basic and acidic residues) spans 1-11 (MEAKVEEKEPE). The disordered stretch occupies residues 1-21 (MEAKVEEKEPEPVENAGPDAP). 658-665 (GPNMGGKS) is a binding site for ATP.

Belongs to the DNA mismatch repair MutS family.

Functionally, this protein is involved in the repair of mismatches in DNA. It is possible that it carries out the mismatch recognition step. This protein has a weak ATPase activity. The polypeptide is DNA mismatch repair protein MutS (Brucella melitensis biotype 1 (strain ATCC 23456 / CCUG 17765 / NCTC 10094 / 16M)).